Reading from the N-terminus, the 204-residue chain is MVCGGFSCSKNCLCALNLLYTLVSLLLIGIAAWGIGFGLISSLRVVGVVIAVGIFLFLIALVGLIGAVKHHQVLLFFYMIILLLVFIVQFSVSCACLALNREQQGQLLEVGWNNTASARNDIQRNLNCCGFRNYNPNDTCPASCAKSNQKCSSCAPIIGEYAGEVLRFVGGIGLFFSFTEILGVWLTYRYRNQKDPRANPSAFL.

Over 1-19 (MVCGGFSCSKNCLCALNLL) the chain is Cytoplasmic. Residues 20-40 (YTLVSLLLIGIAAWGIGFGLI) traverse the membrane as a helical segment. Over 41–44 (SSLR) the chain is Extracellular. The helical transmembrane segment at 45 to 65 (VVGVVIAVGIFLFLIALVGLI) threads the bilayer. Residues 66–72 (GAVKHHQ) are Cytoplasmic-facing. The chain crosses the membrane as a helical span at residues 73 to 93 (VLLFFYMIILLLVFIVQFSVS). At 94–167 (CACLALNREQ…IGEYAGEVLR (74 aa)) the chain is on the extracellular side. Residues N113 and N137 are each glycosylated (N-linked (GlcNAc...) asparagine). Residue S143 is modified to Phosphoserine. Residues 168-188 (FVGGIGLFFSFTEILGVWLTY) traverse the membrane as a helical segment. The Cytoplasmic segment spans residues 189–204 (RYRNQKDPRANPSAFL).

It belongs to the tetraspanin (TM4SF) family.

The protein resides in the membrane. The chain is Tetraspanin-13 (Tspan13) from Rattus norvegicus (Rat).